The primary structure comprises 60 residues: Large ribosomal subunit protein bL32 (60 aa).

Belongs to the bacterial ribosomal protein bL32 family.

The protein is Large ribosomal subunit protein bL32 of Pediococcus pentosaceus (strain ATCC 25745 / CCUG 21536 / LMG 10740 / 183-1w).